The sequence spans 233 residues: MKTIVVCSGGLDSVSLAHMVAAQGGLTRLISFDYGQRHRKELDYAALAARRLGVPHHVIDMRGVGAVLTGSALTGGAEVPDGHYAEETMRITVVPNRNAIMLTVAFGMAAAMGDQAVATAVHGGDHFIYPDCRPAFTQAFQQMQDAALDGYAQARLLTPFVHRTKADIVTEGARHDTPFAETWSCYKGGALHCGRCGTCVERREAFHLAGIPDPTAYEDADFWRQAIAERERA.

7-17 (CSGGLDSVSLA) is a binding site for ATP. Residues cysteine 185, cysteine 193, cysteine 196, and cysteine 199 each coordinate Zn(2+).

The protein belongs to the QueC family. Requires Zn(2+) as cofactor.

The catalysed reaction is 7-carboxy-7-deazaguanine + NH4(+) + ATP = 7-cyano-7-deazaguanine + ADP + phosphate + H2O + H(+). Its pathway is purine metabolism; 7-cyano-7-deazaguanine biosynthesis. Its function is as follows. Catalyzes the ATP-dependent conversion of 7-carboxy-7-deazaguanine (CDG) to 7-cyano-7-deazaguanine (preQ(0)). The polypeptide is 7-cyano-7-deazaguanine synthase (Paracoccus denitrificans (strain Pd 1222)).